The primary structure comprises 72 residues: Cell division protein ZapB (72 aa).

Residues 5-71 (ILDQLEEKIK…LRSLLGQIDN (67 aa)) are a coiled coil.

This sequence belongs to the ZapB family. In terms of assembly, homodimer. The ends of the coiled-coil dimer bind to each other, forming polymers. Interacts with FtsZ.

The protein localises to the cytoplasm. Functionally, non-essential, abundant cell division factor that is required for proper Z-ring formation. It is recruited early to the divisome by direct interaction with FtsZ, stimulating Z-ring assembly and thereby promoting cell division earlier in the cell cycle. Its recruitment to the Z-ring requires functional FtsA or ZipA. The sequence is that of Cell division protein ZapB from Actinobacillus pleuropneumoniae serotype 5b (strain L20).